The primary structure comprises 294 residues: 33 kDa chaperonin (294 aa).

2 disulfide bridges follow: cysteine 238-cysteine 240 and cysteine 271-cysteine 274.

It belongs to the HSP33 family. Under oxidizing conditions two disulfide bonds are formed involving the reactive cysteines. Under reducing conditions zinc is bound to the reactive cysteines and the protein is inactive.

The protein resides in the cytoplasm. Functionally, redox regulated molecular chaperone. Protects both thermally unfolding and oxidatively damaged proteins from irreversible aggregation. Plays an important role in the bacterial defense system toward oxidative stress. The protein is 33 kDa chaperonin of Clostridium tetani (strain Massachusetts / E88).